The following is a 114-amino-acid chain: Probable 4-amino-4-deoxy-L-arabinose-phosphoundecaprenol flippase subunit ArnE (114 aa).

An EamA domain is found at 39–112; the sequence is RSPWLWLALF…VIGGVALLGQ (74 aa). The next 3 membrane-spanning stretches (helical) occupy residues 41–61, 64–84, and 91–111; these read PWLW…LLVL, LPVS…TLIA, and PVDV…ALLG.

Belongs to the ArnE family. In terms of assembly, heterodimer of ArnE and ArnF.

It localises to the cell inner membrane. The protein operates within bacterial outer membrane biogenesis; lipopolysaccharide biosynthesis. Functionally, translocates 4-amino-4-deoxy-L-arabinose-phosphoundecaprenol (alpha-L-Ara4N-phosphoundecaprenol) from the cytoplasmic to the periplasmic side of the inner membrane. The protein is Probable 4-amino-4-deoxy-L-arabinose-phosphoundecaprenol flippase subunit ArnE of Pseudomonas fluorescens (strain Pf0-1).